The chain runs to 245 residues: Small ribosomal subunit protein uS2 (245 aa).

The protein belongs to the universal ribosomal protein uS2 family.

The polypeptide is Small ribosomal subunit protein uS2 (Pseudomonas entomophila (strain L48)).